A 505-amino-acid chain; its full sequence is Aspartyl/glutamyl-tRNA(Asn/Gln) amidotransferase subunit B (505 aa).

Belongs to the GatB/GatE family. GatB subfamily. As to quaternary structure, heterotrimer of A, B and C subunits.

The enzyme catalyses L-glutamyl-tRNA(Gln) + L-glutamine + ATP + H2O = L-glutaminyl-tRNA(Gln) + L-glutamate + ADP + phosphate + H(+). It catalyses the reaction L-aspartyl-tRNA(Asn) + L-glutamine + ATP + H2O = L-asparaginyl-tRNA(Asn) + L-glutamate + ADP + phosphate + 2 H(+). Functionally, allows the formation of correctly charged Asn-tRNA(Asn) or Gln-tRNA(Gln) through the transamidation of misacylated Asp-tRNA(Asn) or Glu-tRNA(Gln) in organisms which lack either or both of asparaginyl-tRNA or glutaminyl-tRNA synthetases. The reaction takes place in the presence of glutamine and ATP through an activated phospho-Asp-tRNA(Asn) or phospho-Glu-tRNA(Gln). This is Aspartyl/glutamyl-tRNA(Asn/Gln) amidotransferase subunit B from Corynebacterium jeikeium (strain K411).